The following is a 357-amino-acid chain: DNA integrity scanning protein DisA (357 aa).

The 139-residue stretch at V8–I146 folds into the DAC domain. ATP contacts are provided by residues G75, L93, and M106–T110.

Belongs to the DisA family. Homooctamer. The cofactor is Mg(2+).

The catalysed reaction is 2 ATP = 3',3'-c-di-AMP + 2 diphosphate. Its function is as follows. Participates in a DNA-damage check-point that is active prior to asymmetric division when DNA is damaged. DisA forms globular foci that rapidly scan along the chromosomes during sporulation, searching for lesions. When a lesion is present, DisA pauses at the lesion site. This triggers a cellular response that culminates in a temporary block in sporulation initiation. Also has diadenylate cyclase activity, catalyzing the condensation of 2 ATP molecules into cyclic di-AMP (c-di-AMP). c-di-AMP acts as a signaling molecule that couples DNA integrity with progression of sporulation. The rise in c-di-AMP level generated by DisA while scanning the chromosome, operates as a positive signal that advances sporulation; upon encountering a lesion, the DisA focus arrests at the damaged site and halts c-di-AMP synthesis. The chain is DNA integrity scanning protein DisA from Bacillus cereus (strain B4264).